We begin with the raw amino-acid sequence, 201 residues long: Probable molybdenum cofactor guanylyltransferase (201 aa).

GTP is bound by residues 20–22 (LAG), K32, D77, and D106. D106 is a binding site for Mg(2+).

Belongs to the MobA family. The cofactor is Mg(2+).

Its subcellular location is the cytoplasm. The enzyme catalyses Mo-molybdopterin + GTP + H(+) = Mo-molybdopterin guanine dinucleotide + diphosphate. Functionally, transfers a GMP moiety from GTP to Mo-molybdopterin (Mo-MPT) cofactor (Moco or molybdenum cofactor) to form Mo-molybdopterin guanine dinucleotide (Mo-MGD) cofactor. In Aquifex aeolicus (strain VF5), this protein is Probable molybdenum cofactor guanylyltransferase.